The chain runs to 308 residues: MAGKKNVLSSLAIYAEYSDPESDGETGVDAVGGATEEKGGLVSDAYGEDDFSRPGGDEDGYEEEEDENSKQSEDDDSETEKPEADDPKDNTEAEKRDPQELVASFSERVRNMSPDEIKIPPEPPGRCSNHLQDKIQKLYERKIKEGMDMNYIIQRKKEFRNPSIYEKLIQFCAIDELGTNYPKDMFDPHGWSEDSYYEALAKAQKIEMDKLEKAKKERTKIEFVTGTKKGTTTNATATSTSTASTAVADAQKRKSKWDSAIPVTTIAQPTILTTTATLPAVVTVTTSASGSKTTVISAVGTIVKKAKQ.

Residues 15-101 are disordered; that stretch reads AEYSDPESDG…EAEKRDPQEL (87 aa). Phosphoserine occurs at positions 18, 22, 43, and 52. Positions 57–78 are enriched in acidic residues; sequence DEDGYEEEEDENSKQSEDDDSE. The segment covering 79 to 99 has biased composition (basic and acidic residues); the sequence is TEKPEADDPKDNTEAEKRDPQ. Lysine 95 is covalently cross-linked (Glycyl lysine isopeptide (Lys-Gly) (interchain with G-Cter in SUMO2)). Serine 113 is modified (phosphoserine). Glycyl lysine isopeptide (Lys-Gly) (interchain with G-Cter in SUMO2) cross-links involve residues lysine 220, lysine 304, and lysine 305.

The protein belongs to the HCNGP family. Interacts with histone deacetylase complex subunit SAP30.

Its subcellular location is the nucleus. Functionally, plays a role in transcriptional repression by promoting histone deacetylase activity, leading to deacetylation of histone H3. May be involved in the regulation of beta-2-microglobulin genes. This chain is SAP30-binding protein (Sap30bp), found in Mus musculus (Mouse).